Consider the following 123-residue polypeptide: RxLR effector protein Avh262 (123 aa).

An N-terminal signal peptide occupies residues 1–18; that stretch reads MLPVAVVLVVFAVAVTSA. The tract at residues 24–46 is disordered; that stretch reads VNPLPRRRRLKGTEEKGHHTNVN. Residues 30 to 50 carry the RxLR-dEER motif; that stretch reads RRRLKGTEEKGHHTNVNDEER. The span at 34–46 shows a compositional bias: basic and acidic residues; the sequence is KGTEEKGHHTNVN. The tract at residues 60–82 is biP-binding; sequence LISKLKVKINAKLLAGDSAKPAT.

Belongs to the RxLR effector family. In terms of assembly, interacts with host plant ER-luminal binding immunoglobulin proteins (BiPs) such as soybean BiP1, BiP2, BiP3 and BiP4.

Its subcellular location is the secreted. The protein resides in the host endoplasmic reticulum. Functionally, effector that suppresses plant defense responses during the early stages of pathogen infection. Suppresses cell death induced by effectors and PAMPs in plant hosts. Avh262 stabilizes endoplasmic reticulum (ER)-luminal binding immunoglobulin proteins (BiPs), which act as negative regulators of plant resistance to Phytophthora. By stabilizing BiPs, Avh262 suppresses ER stress-triggered cell death and facilitates Phytophthora infection. The protein is RxLR effector protein Avh262 of Phytophthora sojae (Soybean stem and root rot agent).